Here is a 116-residue protein sequence, read N- to C-terminus: NADPH-dependent 7-cyano-7-deazaguanine reductase (116 aa).

The active-site Thioimide intermediate is the Cys31. The Proton donor role is filled by Asp38. Substrate is bound by residues Ile53–Leu55 and Tyr72–Glu73.

This sequence belongs to the GTP cyclohydrolase I family. QueF type 1 subfamily.

The protein resides in the cytoplasm. The catalysed reaction is 7-aminomethyl-7-carbaguanine + 2 NADP(+) = 7-cyano-7-deazaguanine + 2 NADPH + 3 H(+). It participates in tRNA modification; tRNA-queuosine biosynthesis. Catalyzes the NADPH-dependent reduction of 7-cyano-7-deazaguanine (preQ0) to 7-aminomethyl-7-deazaguanine (preQ1). In Chlorobaculum parvum (strain DSM 263 / NCIMB 8327) (Chlorobium vibrioforme subsp. thiosulfatophilum), this protein is NADPH-dependent 7-cyano-7-deazaguanine reductase.